We begin with the raw amino-acid sequence, 224 residues long: UPF0758 protein ABO_0214 (224 aa).

The 123-residue stretch at P102–V224 folds into the MPN domain. Zn(2+) contacts are provided by H173, H175, and D186. The JAMM motif motif lies at H173–D186.

This sequence belongs to the UPF0758 family.

This is UPF0758 protein ABO_0214 from Alcanivorax borkumensis (strain ATCC 700651 / DSM 11573 / NCIMB 13689 / SK2).